A 659-amino-acid polypeptide reads, in one-letter code: Probable acyl-coenzyme A oxidase acox-1.5 (659 aa).

FAD contacts are provided by residues 148 to 151, 156 to 157, and Gly-190; these read YAQT and GT. Substrate-binding positions include 284–287 and Arg-294; that span reads KVGY. FAD-binding positions include Arg-319 and 339-342; that span reads QQYR. ATP is bound by residues His-395 and Gln-403. Gly-410 is an FAD binding site. Substrate is bound at residue 432–433; the sequence is YE. Glu-433 (proton acceptor) is an active-site residue. Position 435 (Glu-435) interacts with FAD. 524-527 serves as a coordination point for ATP; the sequence is KAAR. The Microbody targeting signal signature appears at 657–659; sequence SKL.

This sequence belongs to the acyl-CoA oxidase family. In terms of assembly, homodimer. Requires FAD as cofactor.

Its subcellular location is the peroxisome. It participates in lipid metabolism; peroxisomal fatty acid beta-oxidation. Activated by ATP. ATP binding leads to a conformational change that promotes FAD cofactor binding and enzyme activity. ATP binding likely occurs during acox-1.5 folding and/or dimer formation. Its function is as follows. Involved in the first step of peroxisomal beta-oxidation by catalyzing the desaturation of fatty acid-derived side chains. This chain is Probable acyl-coenzyme A oxidase acox-1.5, found in Caenorhabditis elegans.